The following is a 476-amino-acid chain: UDP-N-acetylmuramoylalanine--D-glutamate ligase (476 aa).

Residue 122-128 (GSNAKST) participates in ATP binding.

Belongs to the MurCDEF family.

It is found in the cytoplasm. It carries out the reaction UDP-N-acetyl-alpha-D-muramoyl-L-alanine + D-glutamate + ATP = UDP-N-acetyl-alpha-D-muramoyl-L-alanyl-D-glutamate + ADP + phosphate + H(+). It functions in the pathway cell wall biogenesis; peptidoglycan biosynthesis. Cell wall formation. Catalyzes the addition of glutamate to the nucleotide precursor UDP-N-acetylmuramoyl-L-alanine (UMA). In Psychrobacter arcticus (strain DSM 17307 / VKM B-2377 / 273-4), this protein is UDP-N-acetylmuramoylalanine--D-glutamate ligase.